A 284-amino-acid polypeptide reads, in one-letter code: Phosphatidylglycerol--prolipoprotein diacylglyceryl transferase (284 aa).

A run of 7 helical transmembrane segments spans residues 14-34 (IAFS…ACAI), 62-82 (YFLW…ILIY), 106-126 (FVGI…IASY), 136-156 (LLIY…FGRI), 190-210 (PSQL…VLWA), 218-238 (GLLI…AEFY), and 252-272 (LSMG…ILLY). Arginine 155 contacts a 1,2-diacyl-sn-glycero-3-phospho-(1'-sn-glycerol).

Belongs to the Lgt family.

It is found in the cell inner membrane. It carries out the reaction L-cysteinyl-[prolipoprotein] + a 1,2-diacyl-sn-glycero-3-phospho-(1'-sn-glycerol) = an S-1,2-diacyl-sn-glyceryl-L-cysteinyl-[prolipoprotein] + sn-glycerol 1-phosphate + H(+). Its pathway is protein modification; lipoprotein biosynthesis (diacylglyceryl transfer). Functionally, catalyzes the transfer of the diacylglyceryl group from phosphatidylglycerol to the sulfhydryl group of the N-terminal cysteine of a prolipoprotein, the first step in the formation of mature lipoproteins. The chain is Phosphatidylglycerol--prolipoprotein diacylglyceryl transferase from Helicobacter pylori (strain Shi470).